The primary structure comprises 238 residues: Hydroxyacylglutathione hydrolase (238 aa).

Zn(2+) contacts are provided by histidine 52, histidine 54, aspartate 56, histidine 57, histidine 108, aspartate 125, and histidine 163.

This sequence belongs to the metallo-beta-lactamase superfamily. Glyoxalase II family. Monomer. It depends on Zn(2+) as a cofactor.

The catalysed reaction is an S-(2-hydroxyacyl)glutathione + H2O = a 2-hydroxy carboxylate + glutathione + H(+). It functions in the pathway secondary metabolite metabolism; methylglyoxal degradation; (R)-lactate from methylglyoxal: step 2/2. In terms of biological role, thiolesterase that catalyzes the hydrolysis of S-D-lactoyl-glutathione to form glutathione and D-lactic acid. This chain is Hydroxyacylglutathione hydrolase, found in Haemophilus influenzae (strain ATCC 51907 / DSM 11121 / KW20 / Rd).